The chain runs to 191 residues: Large ribosomal subunit protein uL29m (191 aa).

The protein belongs to the universal ribosomal protein uL29 family. In terms of assembly, component of the mitochondrial large ribosomal subunit. Mature mitochondrial ribosomes consist of a small (37S) and a large (54S) subunit. The 37S subunit contains at least 33 different proteins and 1 molecule of RNA (15S). The 54S subunit contains at least 45 different proteins and 1 molecule of RNA (21S).

It localises to the mitochondrion. The protein is Large ribosomal subunit protein uL29m (MRPL4) of Sclerotinia sclerotiorum (strain ATCC 18683 / 1980 / Ss-1) (White mold).